The primary structure comprises 125 residues: Small ribosomal subunit protein uS12 (125 aa).

Asp-89 carries the 3-methylthioaspartic acid modification.

It belongs to the universal ribosomal protein uS12 family. In terms of assembly, part of the 30S ribosomal subunit. Contacts proteins S8 and S17. May interact with IF1 in the 30S initiation complex.

Its function is as follows. With S4 and S5 plays an important role in translational accuracy. In terms of biological role, interacts with and stabilizes bases of the 16S rRNA that are involved in tRNA selection in the A site and with the mRNA backbone. Located at the interface of the 30S and 50S subunits, it traverses the body of the 30S subunit contacting proteins on the other side and probably holding the rRNA structure together. The combined cluster of proteins S8, S12 and S17 appears to hold together the shoulder and platform of the 30S subunit. In Ralstonia nicotianae (strain ATCC BAA-1114 / GMI1000) (Ralstonia solanacearum), this protein is Small ribosomal subunit protein uS12.